We begin with the raw amino-acid sequence, 94 residues long: Phosphoribosyl-ATP pyrophosphatase (94 aa).

This sequence belongs to the PRA-PH family.

It localises to the cytoplasm. It carries out the reaction 1-(5-phospho-beta-D-ribosyl)-ATP + H2O = 1-(5-phospho-beta-D-ribosyl)-5'-AMP + diphosphate + H(+). It functions in the pathway amino-acid biosynthesis; L-histidine biosynthesis; L-histidine from 5-phospho-alpha-D-ribose 1-diphosphate: step 2/9. The protein is Phosphoribosyl-ATP pyrophosphatase of Saccharolobus islandicus (strain M.16.27) (Sulfolobus islandicus).